Reading from the N-terminus, the 932-residue chain is Phosphoenolpyruvate carboxylase (932 aa).

Residues His164 and Lys594 contribute to the active site.

This sequence belongs to the PEPCase type 1 family. It depends on Mg(2+) as a cofactor.

It carries out the reaction oxaloacetate + phosphate = phosphoenolpyruvate + hydrogencarbonate. Its function is as follows. Forms oxaloacetate, a four-carbon dicarboxylic acid source for the tricarboxylic acid cycle. This is Phosphoenolpyruvate carboxylase from Bradyrhizobium diazoefficiens (strain JCM 10833 / BCRC 13528 / IAM 13628 / NBRC 14792 / USDA 110).